Reading from the N-terminus, the 153-residue chain is Satratoxin biosynthesis SC2 cluster transcription factor SAT15 (153 aa).

The protein resides in the nucleus. Its function is as follows. Transcriptional regulator that may regulate the expression of the satratoxin biosynthesis SC2 cluster, one of the 3 clusters involved in the biosynthesis of satratoxins, trichothecene mycotoxins that are associated with human food poisonings. In Stachybotrys chartarum (strain CBS 109288 / IBT 7711) (Toxic black mold), this protein is Satratoxin biosynthesis SC2 cluster transcription factor SAT15.